The sequence spans 358 residues: Peptide chain release factor 1 (358 aa).

Q234 is subject to N5-methylglutamine. Positions 283 to 306 (ERLHSERAGQRKSMVGSGDRSERI) are disordered.

It belongs to the prokaryotic/mitochondrial release factor family. In terms of processing, methylated by PrmC. Methylation increases the termination efficiency of RF1.

It localises to the cytoplasm. Peptide chain release factor 1 directs the termination of translation in response to the peptide chain termination codons UAG and UAA. The polypeptide is Peptide chain release factor 1 (Zymomonas mobilis subsp. mobilis (strain ATCC 31821 / ZM4 / CP4)).